A 518-amino-acid chain; its full sequence is Metal transporter Nramp1 (518 aa).

Transmembrane regions (helical) follow at residues 35-55 (FLSH…PGNM), 68-88 (ELLW…SLSA), 107-127 (PVWV…ASDI), 131-151 (IGTG…GVLI), 172-192 (VVVA…MSIV), 218-238 (IALL…ALVL), 255-275 (FFLF…IAII), 315-337 (SATV…GTYA), 357-377 (LMTR…GGSS), 382-402 (LIVI…IPLL), 418-438 (IYIV…NIYF), and 458-478 (VLIG…VIYL).

It belongs to the NRAMP (TC 2.A.55) family.

The protein resides in the membrane. Functionally, probable metal transporter that may participate in the control of iron homeostasis. This Oryza sativa subsp. japonica (Rice) protein is Metal transporter Nramp1 (NRAMP1).